Reading from the N-terminus, the 146-residue chain is Holo-[acyl-carrier-protein] synthase (146 aa).

Mg(2+) is bound by residues Asp-9 and Glu-63.

The protein belongs to the P-Pant transferase superfamily. AcpS family. The cofactor is Mg(2+).

It localises to the cytoplasm. The catalysed reaction is apo-[ACP] + CoA = holo-[ACP] + adenosine 3',5'-bisphosphate + H(+). Transfers the 4'-phosphopantetheine moiety from coenzyme A to a Ser of acyl-carrier-protein. In Burkholderia ambifaria (strain ATCC BAA-244 / DSM 16087 / CCUG 44356 / LMG 19182 / AMMD) (Burkholderia cepacia (strain AMMD)), this protein is Holo-[acyl-carrier-protein] synthase.